A 303-amino-acid polypeptide reads, in one-letter code: 1-acyl-sn-glycerol-3-phosphate acyltransferase (303 aa).

The short motif at 82-87 (HQSTLD) is the HXXXXD motif element. Positions 278–303 (NEPVPSVSISNDVNTHNEGSSVKKMH) are disordered. A compositionally biased stretch (polar residues) spans 284-297 (VSISNDVNTHNEGS).

It belongs to the 1-acyl-sn-glycerol-3-phosphate acyltransferase family.

It localises to the lipid droplet. The enzyme catalyses a 1-acyl-sn-glycero-3-phosphate + an acyl-CoA = a 1,2-diacyl-sn-glycero-3-phosphate + CoA. It catalyses the reaction a 1-acyl-sn-glycero-3-phosphocholine + an acyl-CoA = a 1,2-diacyl-sn-glycero-3-phosphocholine + CoA. It carries out the reaction a 1-acyl-sn-glycero-3-phosphoethanolamine + an acyl-CoA = a 1,2-diacyl-sn-glycero-3-phosphoethanolamine + CoA. The catalysed reaction is 1-hexadecanoyl-sn-glycero-3-phosphate + (9Z)-octadecenoyl-CoA = 1-hexadecanoyl-2-(9Z-octadecenoyl)-sn-glycero-3-phosphate + CoA. The enzyme catalyses 1-octadecanoyl-sn-glycero-3-phosphate + (9Z)-octadecenoyl-CoA = 1-octadecanoyl-2-(9Z-octadecenoyl)-sn-glycero-3-phosphate + CoA. It catalyses the reaction 1-(9Z-octadecenoyl)-sn-glycero-3-phospho-L-serine + (9Z)-octadecenoyl-CoA = 1,2-di-(9Z)-octadecenoyl-sn-glycero-3-phospho-L-serine + CoA. It carries out the reaction a 1-acyl-sn-glycero-3-phospho-(1D-myo-inositol) + (9Z)-octadecenoyl-CoA = a 1-acyl-2-(9Z-octadecenoyl)-sn-glycero-3-phospho-(1D-myo-inositol) + CoA. The catalysed reaction is 1-heptadecanoyl-sn-glycero-3-phosphate + (9Z)-octadecenoyl-CoA = 1-heptadecanoyl-2-(9Z)-octadecenoyl-sn-glycero-3-phosphate + CoA. The enzyme catalyses 1-heptadecanoyl-sn-glycero-3-phosphate + dodecanoyl-CoA = 1-heptadecanoyl-2-dodecanoyl-sn-glycero-3-phosphate + CoA. It catalyses the reaction 1-heptadecanoyl-sn-glycero-3-phosphate + tetradecanoyl-CoA = 1-heptadecanoyl-2-tetradecanoyl-sn-glycero-3-phosphate + CoA. It participates in phospholipid metabolism; CDP-diacylglycerol biosynthesis; CDP-diacylglycerol from sn-glycerol 3-phosphate: step 2/3. In terms of biological role, acyltransferase that catalyzes the sn-2-specific, acyl-CoA-dependent acylation of lysophosphatidic acid (LPA) to phosphatidic acid (PA) in lipid particles. Together with ALE1, plays a central role in PA biosynthesis. PA is the intermediate, from which all glycerophospholipids are synthesized. Can also acylate lysophosphoinositol (LPI) and lysophosphoserine (LPS). The fatty acyl substrates include 18:1-acyl-CoA, 14:0-acyl-CoA, 12:0-acyl-CoA and 10:0-acyl-CoA. This chain is 1-acyl-sn-glycerol-3-phosphate acyltransferase, found in Saccharomyces cerevisiae (strain ATCC 204508 / S288c) (Baker's yeast).